The chain runs to 238 residues: End-binding protein 1 (238 aa).

In terms of domain architecture, Calponin-homology (CH) spans 15–117 (FVGRVSLLKW…FFQWFKWFFD (103 aa)). The interaction with aurora kinase stretch occupies residues 101 to 238 (KYMDNFEFFQ…EDILYAEYHQ (138 aa)). The segment covering 124–165 (KSGATESGSANAVTKTSKPGNRSGSTAASMQNPKASSTSGPS) has biased composition (polar residues). Positions 124 to 169 (KSGATESGSANAVTKTSKPGNRSGSTAASMQNPKASSTSGPSIDSK) are disordered. Serine 148 bears the Phosphoserine mark. Residues 156–238 (PKASSTSGPS…EDILYAEYHQ (83 aa)) enclose the EB1 C-terminal domain.

It belongs to the MAPRE family. In terms of assembly, homodimer; disulfide-linked and via interaction of the C-terminal EB1-specific domains. Interacts with BOP1 (via C-terminal WD repeats). Interacts with giardin subunit gamma, neurogenic locus notch homolog protein, GL50803_8358 and GL50803_11327. Interacts (via C-terminal residues 101-238) with aurora kinase. Interacts with tubulin gamma chain. Phosphorylated in vitro by aurora kinase. Phosphorylation is important for cell division.

The protein localises to the nucleus membrane. The protein resides in the cytoplasm. Its subcellular location is the cytoskeleton. It is found in the spindle. It localises to the nucleus envelope. The protein localises to the flagellum axoneme. The protein resides in the cell projection. Its subcellular location is the cilium. It is found in the flagellum. Involved in cell division. Involved in mitosis. Regulates dynamics of microtubules (MTs) during mitosis. Required for cytokinesis. Binds polymerized MTs in vitro. Is able to rescue a mitotic division defect, the proper positioning of the nucleus, of the S.cerevisiae BIM1 knockout mutant in a complementation assay. May play a role in spindle positioning and MT distribution. May be involved in MT nucleation for the formation of median bodies and in the biogenesis of flagella. Based on its localization to both the flagellar exit point and the distal flagellar tips, it may mediate the transition from anterograde to retrograde intraflagellar transport (IFT). The sequence is that of End-binding protein 1 from Giardia intestinalis (strain ATCC 50803 / WB clone C6) (Giardia lamblia).